Here is a 430-residue protein sequence, read N- to C-terminus: Adenylosuccinate synthetase (430 aa).

GTP is bound by residues 12–18 and 40–42; these read GDEGKGK and GHT. Catalysis depends on Asp13, which acts as the Proton acceptor. Mg(2+)-binding residues include Asp13 and Gly40. IMP is bound by residues 13–16, 38–41, Thr128, Arg142, Gln223, Thr238, and Arg302; these read DEGK and NAGH. The active-site Proton donor is His41. Substrate is bound at residue 298 to 304; the sequence is TTTGRPR. Residues Arg304, 330 to 332, and 412 to 414 contribute to the GTP site; these read LLD and SVG.

The protein belongs to the adenylosuccinate synthetase family. In terms of assembly, homodimer. Mg(2+) serves as cofactor.

It is found in the cytoplasm. The enzyme catalyses IMP + L-aspartate + GTP = N(6)-(1,2-dicarboxyethyl)-AMP + GDP + phosphate + 2 H(+). It functions in the pathway purine metabolism; AMP biosynthesis via de novo pathway; AMP from IMP: step 1/2. Plays an important role in the de novo pathway of purine nucleotide biosynthesis. Catalyzes the first committed step in the biosynthesis of AMP from IMP. The chain is Adenylosuccinate synthetase from Listeria welshimeri serovar 6b (strain ATCC 35897 / DSM 20650 / CCUG 15529 / CIP 8149 / NCTC 11857 / SLCC 5334 / V8).